The sequence spans 115 residues: Large ribosomal subunit protein uL24 (115 aa).

It belongs to the universal ribosomal protein uL24 family. In terms of assembly, part of the 50S ribosomal subunit.

Functionally, one of two assembly initiator proteins, it binds directly to the 5'-end of the 23S rRNA, where it nucleates assembly of the 50S subunit. In terms of biological role, one of the proteins that surrounds the polypeptide exit tunnel on the outside of the subunit. The polypeptide is Large ribosomal subunit protein uL24 (Beutenbergia cavernae (strain ATCC BAA-8 / DSM 12333 / CCUG 43141 / JCM 11478 / NBRC 16432 / NCIMB 13614 / HKI 0122)).